The chain runs to 170 residues: Ubiquitin-conjugating enzyme E2 G1 (170 aa).

Position 1 is an N-acetylmethionine (Met1). N-acetylthreonine; in Ubiquitin-conjugating enzyme E2 G1, N-terminally processed is present on Thr2. Residues 5 to 166 enclose the UBC core domain; it reads QSALLLRRQL…VARCVRKSQE (162 aa). Catalysis depends on Cys90, which acts as the Glycyl thioester intermediate.

The protein belongs to the ubiquitin-conjugating enzyme family. Autoubiquitinated in vitro. In terms of tissue distribution, widely expressed, mainly in skeletal muscle.

It catalyses the reaction S-ubiquitinyl-[E1 ubiquitin-activating enzyme]-L-cysteine + [E2 ubiquitin-conjugating enzyme]-L-cysteine = [E1 ubiquitin-activating enzyme]-L-cysteine + S-ubiquitinyl-[E2 ubiquitin-conjugating enzyme]-L-cysteine.. The protein operates within protein modification; protein ubiquitination. Functionally, accepts ubiquitin from the E1 complex and catalyzes its covalent attachment to other proteins. In vitro catalyzes 'Lys-48'-, as well as 'Lys-63'-linked polyubiquitination. May be involved in degradation of muscle-specific proteins. Mediates polyubiquitination of CYP3A4. This Homo sapiens (Human) protein is Ubiquitin-conjugating enzyme E2 G1 (UBE2G1).